We begin with the raw amino-acid sequence, 224 residues long: Urease accessory protein UreF (224 aa).

The protein belongs to the UreF family. In terms of assembly, ureD, UreF and UreG form a complex that acts as a GTP-hydrolysis-dependent molecular chaperone, activating the urease apoprotein by helping to assemble the nickel containing metallocenter of UreC. The UreE protein probably delivers the nickel.

It is found in the cytoplasm. Functionally, required for maturation of urease via the functional incorporation of the urease nickel metallocenter. The sequence is that of Urease accessory protein UreF from Enterobacter sp. (strain 638).